Reading from the N-terminus, the 153-residue chain is Arginine repressor (153 aa).

It belongs to the ArgR family.

The protein localises to the cytoplasm. The protein operates within amino-acid biosynthesis; L-arginine biosynthesis [regulation]. In terms of biological role, regulates arginine biosynthesis genes. The sequence is that of Arginine repressor from Haemophilus ducreyi (strain 35000HP / ATCC 700724).